Here is a 25-residue protein sequence, read N- to C-terminus: Pregnancy-associated glycoprotein 74 (25 aa).

Asn-4 and Asn-21 each carry an N-linked (GlcNAc...) asparagine glycan.

Belongs to the peptidase A1 family. Post-translationally, N-glycosylated. Placental cotyledons.

It is found in the secreted. The protein localises to the extracellular space. In Bison bison (American bison), this protein is Pregnancy-associated glycoprotein 74.